Reading from the N-terminus, the 134-residue chain is MSWQTYVDEHLMCDVGDGQGHHLTAAAIVGHDGSVWAQSANFPQFKGQEFSDIMKDFDEPGHLAPTGLFMAGAKYMVIQGEPGAVIRGKKGAGGITIKKTGQSCVFGIYEEPVTPGQCNMVVERLGDYLLEQGL.

This sequence belongs to the profilin family. Occurs in many kinds of cells as a complex with monomeric actin in a 1:1 ratio. Specifically expressed in mature and germinating pollen grains, and growing pollen tubes (at protein level).

It localises to the cytoplasm. Its subcellular location is the cytoskeleton. Binds to actin monomers and regulates the organization of the actin cytoskeleton. At high concentrations, profilin prevents the polymerization of actin, whereas it enhances it at low concentrations. At low concentrations, associates with the poly-proline motif of formins to enhance actin filament elongation rate. Acts redundantly with PRF5 to regulate apical actin polymerization at the tip of pollen tube and control polarized pollen tube growth. Functions probably by favoring formin-mediated actin polymerization at pollen tube tips. The polypeptide is Profilin-4 (Arabidopsis thaliana (Mouse-ear cress)).